The sequence spans 206 residues: Thiamine-phosphate synthase (206 aa).

Residues 36–40 (QLRMK) and Asn68 contribute to the 4-amino-2-methyl-5-(diphosphooxymethyl)pyrimidine site. Residues Asp69 and Asp88 each coordinate Mg(2+). Ser106 contacts 4-amino-2-methyl-5-(diphosphooxymethyl)pyrimidine. 132–134 (TNT) serves as a coordination point for 2-[(2R,5Z)-2-carboxy-4-methylthiazol-5(2H)-ylidene]ethyl phosphate. 4-amino-2-methyl-5-(diphosphooxymethyl)pyrimidine is bound at residue Lys135. Residues Gly162 and 182 to 183 (VS) each bind 2-[(2R,5Z)-2-carboxy-4-methylthiazol-5(2H)-ylidene]ethyl phosphate.

Belongs to the thiamine-phosphate synthase family. Mg(2+) is required as a cofactor.

It carries out the reaction 2-[(2R,5Z)-2-carboxy-4-methylthiazol-5(2H)-ylidene]ethyl phosphate + 4-amino-2-methyl-5-(diphosphooxymethyl)pyrimidine + 2 H(+) = thiamine phosphate + CO2 + diphosphate. It catalyses the reaction 2-(2-carboxy-4-methylthiazol-5-yl)ethyl phosphate + 4-amino-2-methyl-5-(diphosphooxymethyl)pyrimidine + 2 H(+) = thiamine phosphate + CO2 + diphosphate. The enzyme catalyses 4-methyl-5-(2-phosphooxyethyl)-thiazole + 4-amino-2-methyl-5-(diphosphooxymethyl)pyrimidine + H(+) = thiamine phosphate + diphosphate. It functions in the pathway cofactor biosynthesis; thiamine diphosphate biosynthesis; thiamine phosphate from 4-amino-2-methyl-5-diphosphomethylpyrimidine and 4-methyl-5-(2-phosphoethyl)-thiazole: step 1/1. Condenses 4-methyl-5-(beta-hydroxyethyl)thiazole monophosphate (THZ-P) and 2-methyl-4-amino-5-hydroxymethyl pyrimidine pyrophosphate (HMP-PP) to form thiamine monophosphate (TMP). The polypeptide is Thiamine-phosphate synthase (Methanococcus vannielii (strain ATCC 35089 / DSM 1224 / JCM 13029 / OCM 148 / SB)).